Reading from the N-terminus, the 629-residue chain is Glycerol-3-phosphate dehydrogenase SDP6, mitochondrial (629 aa).

The N-terminal 48 residues, 1–48 (MSLASIRRLAAGAAVIAAASGGAVYLSPSVASSDKGGGPILDSLRRRL), are a transit peptide targeting the mitochondrion. 75 to 103 (DVLVIGGGATGSGVALDAVTRGLRVGLVE) is a binding site for FAD.

Belongs to the FAD-dependent glycerol-3-phosphate dehydrogenase family. The cofactor is FAD. As to expression, expressed in germinating seedlings. Also detected in roots, leaves, flowers, developing siliques and germinating seeds.

Its subcellular location is the mitochondrion inner membrane. The catalysed reaction is a quinone + sn-glycerol 3-phosphate = dihydroxyacetone phosphate + a quinol. Its pathway is polyol metabolism; glycerol degradation via glycerol kinase pathway; glycerone phosphate from sn-glycerol 3-phosphate (anaerobic route): step 1/1. In terms of biological role, required for glycerol catabolism and involved in NADH/NAD(+) homeostasis. Essential for postgerminative growth and seedling establishment. The polypeptide is Glycerol-3-phosphate dehydrogenase SDP6, mitochondrial (Arabidopsis thaliana (Mouse-ear cress)).